A 335-amino-acid chain; its full sequence is Ubiquinol oxidase 1b, mitochondrial (335 aa).

Residues 1-47 (MSSRMAGATLLRHLGPRLFAAEPVYSGLAASARGVMPAAARIFPARM) constitute a mitochondrion transit peptide. Residues 160–180 (ALLLETVAGVPGMVGGMLLHL) form a helical membrane-spanning segment. Fe cation is bound by residues glutamate 164, glutamate 203, and histidine 206. The chain crosses the membrane as a helical span at residues 222-242 (ALVLAAQGVFFNAYFVGYLVS). Fe cation contacts are provided by glutamate 254, glutamate 305, and histidine 308.

The protein belongs to the alternative oxidase family. Requires Fe cation as cofactor.

It localises to the mitochondrion inner membrane. The enzyme catalyses 2 a ubiquinol + O2 = 2 a ubiquinone + 2 H2O. Catalyzes the cyanide-resistant oxidation of ubiquinol and the reduction of molecular oxygen to water, but does not translocate protons and consequently is not linked to oxidative phosphorylation. May increase respiration when the cytochrome respiratory pathway is restricted, or in response to low temperatures. The chain is Ubiquinol oxidase 1b, mitochondrial from Oryza sativa subsp. japonica (Rice).